The chain runs to 318 residues: GTP cyclohydrolase MptA (318 aa).

Belongs to the GTP cyclohydrolase IV family. As to quaternary structure, homodimer. Fe(2+) serves as cofactor.

The enzyme catalyses GTP + H2O = 7,8-dihydroneopterin 2',3'-cyclic phosphate + formate + diphosphate + H(+). The protein operates within cofactor biosynthesis; 5,6,7,8-tetrahydromethanopterin biosynthesis. In terms of biological role, converts GTP to 7,8-dihydro-D-neopterin 2',3'-cyclic phosphate, the first intermediate in the biosynthesis of coenzyme methanopterin. In Methanothermobacter thermautotrophicus (strain ATCC 29096 / DSM 1053 / JCM 10044 / NBRC 100330 / Delta H) (Methanobacterium thermoautotrophicum), this protein is GTP cyclohydrolase MptA.